A 237-amino-acid chain; its full sequence is Ditrans,polycis-undecaprenyl-diphosphate synthase ((2E,6E)-farnesyl-diphosphate specific) (237 aa).

D11 is an active-site residue. D11 is a binding site for Mg(2+). Substrate-binding positions include 12–15 (GNGR), W16, R24, H28, and 56–58 (SIE). N59 serves as the catalytic Proton acceptor. Substrate is bound by residues R62, R179, and 185 to 187 (RLS). Residue E198 coordinates Mg(2+).

The protein belongs to the UPP synthase family. As to quaternary structure, homodimer. Mg(2+) serves as cofactor.

It catalyses the reaction 8 isopentenyl diphosphate + (2E,6E)-farnesyl diphosphate = di-trans,octa-cis-undecaprenyl diphosphate + 8 diphosphate. Functionally, catalyzes the sequential condensation of isopentenyl diphosphate (IPP) with (2E,6E)-farnesyl diphosphate (E,E-FPP) to yield (2Z,6Z,10Z,14Z,18Z,22Z,26Z,30Z,34E,38E)-undecaprenyl diphosphate (di-trans,octa-cis-UPP). UPP is the precursor of glycosyl carrier lipid in the biosynthesis of bacterial cell wall polysaccharide components such as peptidoglycan and lipopolysaccharide. The sequence is that of Ditrans,polycis-undecaprenyl-diphosphate synthase ((2E,6E)-farnesyl-diphosphate specific) from Coxiella burnetii (strain RSA 493 / Nine Mile phase I).